Consider the following 194-residue polypeptide: Flagellar transcriptional regulator FlhC (194 aa).

4 residues coordinate Zn(2+): Cys139, Cys142, Cys159, and Cys162.

It belongs to the FlhC family. In terms of assembly, heterohexamer composed of two FlhC and four FlhD subunits. Each FlhC binds a FlhD dimer, forming a heterotrimer, and a hexamer assembles by dimerization of two heterotrimers. It depends on Zn(2+) as a cofactor.

The protein localises to the cytoplasm. Functions in complex with FlhD as a master transcriptional regulator that regulates transcription of several flagellar and non-flagellar operons by binding to their promoter region. Activates expression of class 2 flagellar genes, including fliA, which is a flagellum-specific sigma factor that turns on the class 3 genes. Also regulates genes whose products function in a variety of physiological pathways. In Xenorhabdus nematophila (Achromobacter nematophilus), this protein is Flagellar transcriptional regulator FlhC.